A 180-amino-acid polypeptide reads, in one-letter code: Trafficking protein particle complex subunit 3 (180 aa).

C68 is lipidated: S-palmitoyl cysteine.

Belongs to the TRAPP small subunits family. BET3 subfamily. Homodimer. Part of the multisubunit TRAPP (transport protein particle) complex.

It localises to the golgi apparatus. It is found in the cis-Golgi network. Its subcellular location is the endoplasmic reticulum. May play a role in vesicular transport from endoplasmic reticulum to Golgi. In Gallus gallus (Chicken), this protein is Trafficking protein particle complex subunit 3 (TRAPPC3).